Here is a 453-residue protein sequence, read N- to C-terminus: tRNA modification GTPase MnmE (453 aa).

The (6S)-5-formyl-5,6,7,8-tetrahydrofolate site is built by Arg-28, Glu-90, and Arg-129. Residues 224–375 (GLRVAIIGRP…LSSALLKLCG (152 aa)) enclose the TrmE-type G domain. Position 234 (Asn-234) interacts with K(+). GTP is bound by residues 234 to 239 (NVGKSS), 253 to 259 (TDLPGTT), 278 to 281 (DTAG), and 356 to 358 (SAR). Ser-238 lines the Mg(2+) pocket. The K(+) site is built by Thr-253, Leu-255, and Thr-258. A Mg(2+)-binding site is contributed by Thr-259. Lys-453 serves as a coordination point for (6S)-5-formyl-5,6,7,8-tetrahydrofolate.

Belongs to the TRAFAC class TrmE-Era-EngA-EngB-Septin-like GTPase superfamily. TrmE GTPase family. As to quaternary structure, homodimer. Heterotetramer of two MnmE and two MnmG subunits. K(+) serves as cofactor.

Its subcellular location is the cytoplasm. Its function is as follows. Exhibits a very high intrinsic GTPase hydrolysis rate. Involved in the addition of a carboxymethylaminomethyl (cmnm) group at the wobble position (U34) of certain tRNAs, forming tRNA-cmnm(5)s(2)U34. The sequence is that of tRNA modification GTPase MnmE from Synechococcus sp. (strain RCC307).